A 443-amino-acid chain; its full sequence is Proline--tRNA ligase (443 aa).

The protein belongs to the class-II aminoacyl-tRNA synthetase family. ProS type 2 subfamily. In terms of assembly, homodimer.

It is found in the cytoplasm. It carries out the reaction tRNA(Pro) + L-proline + ATP = L-prolyl-tRNA(Pro) + AMP + diphosphate. Functionally, catalyzes the attachment of proline to tRNA(Pro) in a two-step reaction: proline is first activated by ATP to form Pro-AMP and then transferred to the acceptor end of tRNA(Pro). The sequence is that of Proline--tRNA ligase from Zymomonas mobilis subsp. mobilis (strain ATCC 10988 / DSM 424 / LMG 404 / NCIMB 8938 / NRRL B-806 / ZM1).